A 362-amino-acid chain; its full sequence is Holliday junction branch migration complex subunit RuvB (362 aa).

Positions 1-27 (MANIEKTEFHVPAPVSAAGNQKSSLGN) are disordered. Positions 13 to 206 (APVSAAGNQK…FGFTAQMEFY (194 aa)) are large ATPase domain (RuvB-L). ATP contacts are provided by residues L45, R46, G87, K90, T91, T92, 153-155 (EDF), R196, Y206, and R243. T91 is a Mg(2+) binding site. The small ATPAse domain (RuvB-S) stretch occupies residues 207-277 (EVEDLTKVVV…AAQAALVVFD (71 aa)). The segment at 280–362 (EMGLDRLDRA…EPPEGIIGSL (83 aa)) is head domain (RuvB-H). 2 residues coordinate DNA: R335 and R340.

It belongs to the RuvB family. In terms of assembly, homohexamer. Forms an RuvA(8)-RuvB(12)-Holliday junction (HJ) complex. HJ DNA is sandwiched between 2 RuvA tetramers; dsDNA enters through RuvA and exits via RuvB. An RuvB hexamer assembles on each DNA strand where it exits the tetramer. Each RuvB hexamer is contacted by two RuvA subunits (via domain III) on 2 adjacent RuvB subunits; this complex drives branch migration. In the full resolvosome a probable DNA-RuvA(4)-RuvB(12)-RuvC(2) complex forms which resolves the HJ.

It localises to the cytoplasm. The catalysed reaction is ATP + H2O = ADP + phosphate + H(+). Its function is as follows. The RuvA-RuvB-RuvC complex processes Holliday junction (HJ) DNA during genetic recombination and DNA repair, while the RuvA-RuvB complex plays an important role in the rescue of blocked DNA replication forks via replication fork reversal (RFR). RuvA specifically binds to HJ cruciform DNA, conferring on it an open structure. The RuvB hexamer acts as an ATP-dependent pump, pulling dsDNA into and through the RuvAB complex. RuvB forms 2 homohexamers on either side of HJ DNA bound by 1 or 2 RuvA tetramers; 4 subunits per hexamer contact DNA at a time. Coordinated motions by a converter formed by DNA-disengaged RuvB subunits stimulates ATP hydrolysis and nucleotide exchange. Immobilization of the converter enables RuvB to convert the ATP-contained energy into a lever motion, pulling 2 nucleotides of DNA out of the RuvA tetramer per ATP hydrolyzed, thus driving DNA branch migration. The RuvB motors rotate together with the DNA substrate, which together with the progressing nucleotide cycle form the mechanistic basis for DNA recombination by continuous HJ branch migration. Branch migration allows RuvC to scan DNA until it finds its consensus sequence, where it cleaves and resolves cruciform DNA. This chain is Holliday junction branch migration complex subunit RuvB, found in Corynebacterium diphtheriae (strain ATCC 700971 / NCTC 13129 / Biotype gravis).